A 291-amino-acid chain; its full sequence is Regulator of rDNA transcription protein 5 (291 aa).

Residues 21–104 form the RRM 1 domain; the sequence is KRIYISNLDF…RTLKIKMYVP (84 aa). The segment at 109–151 is disordered; it reads ARAERRKEKRKVPAPQAEENPDAAPQDAQQPQPPAPAEEPTSK. Residues 152 to 235 enclose the RRM 2 domain; sequence DTVYCAYLPS…KKITLRPARL (84 aa). Residues 271–291 are disordered; that stretch reads HRQQEAEIPAAETPDDVAATA.

This sequence belongs to the RRT5 family.

Its function is as follows. May be involved in the modulation of rDNA transcription. This is Regulator of rDNA transcription protein 5 (RRT5) from Lachancea thermotolerans (strain ATCC 56472 / CBS 6340 / NRRL Y-8284) (Yeast).